The chain runs to 158 residues: MSLIPSFFSGRRSNVFDPFSLDVWDPLKDFPFSNSSPSASFPRENPAFVSTRVDWKETPEAHVFKADLPGLKKEEVKVEVEDDRVLQISGERSVEKEDKNDEWHRVERSSGKFLRRFRLPENAKMDKVKASMENGVLTVTVPKEEIKKAEVKSIEISG.

The 115-residue stretch at 44-158 folds into the sHSP domain; that stretch reads ENPAFVSTRV…AEVKSIEISG (115 aa).

The protein belongs to the small heat shock protein (HSP20) family. Forms oligomeric structures.

It localises to the cytoplasm. The polypeptide is 18.1 kDa class I heat shock protein (HSP18.1) (Pisum sativum (Garden pea)).